Consider the following 379-residue polypeptide: Early boundary activity protein 3 (379 aa).

The heterotrimeric Elba complex consists of Elba1, Elba2 and Elba3.

Its subcellular location is the nucleus. In terms of biological role, the heterotrimeric Elba complex is required for chromatin domain boundary function during early embryogenesis. It binds to a 8-bp sequence 5'-CCAATAAG-3' in the Fab-7 insulator or boundary element in the bithorax complex and contributes to its insulator or boundary activity. Elba3 lacks DNA-binding activity and plays the role of an adapter protein, bringing Elba1 and 2 together, thereby establishing a complex that recognizes the asymmetric sequence motif through the BEN domains of Elba1 and 2. The polypeptide is Early boundary activity protein 3 (Drosophila melanogaster (Fruit fly)).